The following is a 292-amino-acid chain: Large ribosomal subunit protein uL18 (292 aa).

This sequence belongs to the universal ribosomal protein uL18 family. As to quaternary structure, component of the large ribosomal subunit (LSU).

It is found in the cytoplasm. The protein localises to the nucleus. Functionally, component of the ribosome, a large ribonucleoprotein complex responsible for the synthesis of proteins in the cell. The small ribosomal subunit (SSU) binds messenger RNAs (mRNAs) and translates the encoded message by selecting cognate aminoacyl-transfer RNA (tRNA) molecules. The large subunit (LSU) contains the ribosomal catalytic site termed the peptidyl transferase center (PTC), which catalyzes the formation of peptide bonds, thereby polymerizing the amino acids delivered by tRNAs into a polypeptide chain. The nascent polypeptides leave the ribosome through a tunnel in the LSU and interact with protein factors that function in enzymatic processing, targeting, and the membrane insertion of nascent chains at the exit of the ribosomal tunnel. This chain is Large ribosomal subunit protein uL18 (rpl5), found in Dictyostelium discoideum (Social amoeba).